A 331-amino-acid polypeptide reads, in one-letter code: Decarboxylase orsB (331 aa).

Zn(2+) contacts are provided by His11, His157, and Asp284.

It belongs to the metallo-dependent hydrolases superfamily. ACMSD family.

The protein operates within secondary metabolite biosynthesis. Decarboxylase; part of the gene cluster that mediates the biosynthesis of orsellinic acid, as well as of the cathepsin K inhibitors F9775 A and F9775 B. The non-reducing polyketide synthase orsA produces orsellinic acid by condensing acetyl-CoA with 3 malonyl-CoA units. Further modifications by the decarboxylase orsB and the tyrosinase-like protein orsC lead to the production of F9775 A and F9775 B. The functions of orsD and orsE remain unclear since only orsB and orsC are required to convert orsellinic acid into F9775 A and F9775 B. The sequence is that of Decarboxylase orsB from Emericella nidulans (strain FGSC A4 / ATCC 38163 / CBS 112.46 / NRRL 194 / M139) (Aspergillus nidulans).